A 38-amino-acid polypeptide reads, in one-letter code: Photosystem II reaction center protein L (38 aa).

A helical membrane pass occupies residues 17–37 (SLYWGLLLIFVLAVLFSSYIF).

This sequence belongs to the PsbL family. As to quaternary structure, PSII is composed of 1 copy each of membrane proteins PsbA, PsbB, PsbC, PsbD, PsbE, PsbF, PsbH, PsbI, PsbJ, PsbK, PsbL, PsbM, PsbT, PsbX, PsbY, PsbZ, Psb30/Ycf12, at least 3 peripheral proteins of the oxygen-evolving complex and a large number of cofactors. It forms dimeric complexes.

Its subcellular location is the plastid. The protein localises to the chloroplast thylakoid membrane. In terms of biological role, one of the components of the core complex of photosystem II (PSII). PSII is a light-driven water:plastoquinone oxidoreductase that uses light energy to abstract electrons from H(2)O, generating O(2) and a proton gradient subsequently used for ATP formation. It consists of a core antenna complex that captures photons, and an electron transfer chain that converts photonic excitation into a charge separation. This subunit is found at the monomer-monomer interface and is required for correct PSII assembly and/or dimerization. The polypeptide is Photosystem II reaction center protein L (Tupiella akineta (Green alga)).